An 814-amino-acid polypeptide reads, in one-letter code: Lon protease 1 (814 aa).

Positions 1–17 are enriched in basic and acidic residues; that stretch reads MTDDRDKTNEDPEKIIE. Positions 1–28 are disordered; it reads MTDDRDKTNEDPEKIIEADFNPEDPDDA. One can recognise a Lon N-terminal domain in the interval 49 to 245; it reads LPIIPLRPRP…KVLVLLKKEL (197 aa). 398–405 provides a ligand contact to ATP; sequence GPPGVGKT. In terms of domain architecture, Lon proteolytic spans 633–814; it reads EDVPGVVTGL…YRDVYQVAFG (182 aa). Catalysis depends on residues S721 and K764.

It belongs to the peptidase S16 family. Homohexamer. Organized in a ring with a central cavity.

The protein localises to the cytoplasm. It carries out the reaction Hydrolysis of proteins in presence of ATP.. ATP-dependent serine protease that mediates the selective degradation of mutant and abnormal proteins as well as certain short-lived regulatory proteins. Required for cellular homeostasis and for survival from DNA damage and developmental changes induced by stress. Degrades polypeptides processively to yield small peptide fragments that are 5 to 10 amino acids long. Binds to DNA in a double-stranded, site-specific manner. The chain is Lon protease 1 from Syntrophotalea carbinolica (strain DSM 2380 / NBRC 103641 / GraBd1) (Pelobacter carbinolicus).